Reading from the N-terminus, the 1391-residue chain is DNA-directed RNA polymerase subunit beta'' (1391 aa).

Zn(2+) is bound by residues Cys220, Cys291, Cys298, and Cys301.

This sequence belongs to the RNA polymerase beta' chain family. RpoC2 subfamily. As to quaternary structure, in plastids the minimal PEP RNA polymerase catalytic core is composed of four subunits: alpha, beta, beta', and beta''. When a (nuclear-encoded) sigma factor is associated with the core the holoenzyme is formed, which can initiate transcription. Requires Zn(2+) as cofactor.

Its subcellular location is the plastid. It is found in the chloroplast. The enzyme catalyses RNA(n) + a ribonucleoside 5'-triphosphate = RNA(n+1) + diphosphate. In terms of biological role, DNA-dependent RNA polymerase catalyzes the transcription of DNA into RNA using the four ribonucleoside triphosphates as substrates. In Gossypium barbadense (Sea Island cotton), this protein is DNA-directed RNA polymerase subunit beta''.